The chain runs to 352 residues: NAD(P)H pyrophosphatase NUDT13, mitochondrial (352 aa).

The transit peptide at 1 to 20 directs the protein to the mitochondrion; sequence MSLYCRTFFRRKSFGCYRLL. The 128-residue stretch at 196 to 323 folds into the Nudix hydrolase domain; sequence PQMAPVVITL…SLALQPSEAS (128 aa). Positions 216–240 match the Nudix box motif; that stretch reads RQSSFPKGLYSALAGFCDIGESVEE.

It belongs to the Nudix hydrolase family. Mg(2+) is required as a cofactor. Mn(2+) serves as cofactor.

It is found in the mitochondrion. It catalyses the reaction NADH + H2O = reduced beta-nicotinamide D-ribonucleotide + AMP + 2 H(+). The enzyme catalyses NAD(+) + H2O = beta-nicotinamide D-ribonucleotide + AMP + 2 H(+). It carries out the reaction NADPH + H2O = reduced beta-nicotinamide D-ribonucleotide + adenosine 2',5'-bisphosphate + 2 H(+). In terms of biological role, NAD(P)H pyrophosphatase that hydrolyzes NADH into NMNH and AMP, and NADPH into NMNH and 2',5'-ADP. Has a marked preference for the reduced pyridine nucleotides. Does not show activity toward NAD-capped RNAs; the NAD-cap is an atypical cap present at the 5'-end of some RNAs. This Mus musculus (Mouse) protein is NAD(P)H pyrophosphatase NUDT13, mitochondrial.